Reading from the N-terminus, the 275-residue chain is Formamidopyrimidine-DNA glycosylase (275 aa).

The active-site Schiff-base intermediate with DNA is the Pro-2. The active-site Proton donor is Glu-3. Lys-58 acts as the Proton donor; for beta-elimination activity in catalysis. Residues His-93, Arg-111, and Arg-156 each coordinate DNA. The FPG-type zinc-finger motif lies at 241–275; sequence FAYDRAGLPCRVCGTPIRQIVQGQRSTYFCPTCQR. Arg-265 functions as the Proton donor; for delta-elimination activity in the catalytic mechanism.

Belongs to the FPG family. As to quaternary structure, monomer. Zn(2+) serves as cofactor.

The catalysed reaction is Hydrolysis of DNA containing ring-opened 7-methylguanine residues, releasing 2,6-diamino-4-hydroxy-5-(N-methyl)formamidopyrimidine.. It catalyses the reaction 2'-deoxyribonucleotide-(2'-deoxyribose 5'-phosphate)-2'-deoxyribonucleotide-DNA = a 3'-end 2'-deoxyribonucleotide-(2,3-dehydro-2,3-deoxyribose 5'-phosphate)-DNA + a 5'-end 5'-phospho-2'-deoxyribonucleoside-DNA + H(+). Functionally, involved in base excision repair of DNA damaged by oxidation or by mutagenic agents. Acts as a DNA glycosylase that recognizes and removes damaged bases. Has a preference for oxidized purines, such as 7,8-dihydro-8-oxoguanine (8-oxoG). Has AP (apurinic/apyrimidinic) lyase activity and introduces nicks in the DNA strand. Cleaves the DNA backbone by beta-delta elimination to generate a single-strand break at the site of the removed base with both 3'- and 5'-phosphates. The chain is Formamidopyrimidine-DNA glycosylase from Burkholderia vietnamiensis (strain G4 / LMG 22486) (Burkholderia cepacia (strain R1808)).